The following is a 61-amino-acid chain: Ubiquinol-cytochrome c reductase complex assembly factor 6 (61 aa).

Residues 1-9 (MPAGVSWGQ) are Mitochondrial matrix-facing. Residues 10 to 32 (YLKFLGCALASMMAGSQAVHLYY) traverse the membrane as a helical segment. The Mitochondrial intermembrane portion of the chain corresponds to 33 to 61 (KPLEDLRVYIEQEQHSTQVDPTAKPPESA).

It belongs to the UQCC6 family. In terms of assembly, interacts with sloth1; the interaction stabilizes both components. Expressed in the brain.

It localises to the mitochondrion inner membrane. It is found in the mitochondrion. Its function is as follows. Required for the assembly and stability of the mitochondrial ubiquinol-cytochrome c reductase complex (complex III (CIII) or cytochrome b-c1 complex), a multisubunit transmembrane complex that is part of the mitochondrial electron transport chain (ETC) which drives oxidative phosphorylation. The polypeptide is Ubiquinol-cytochrome c reductase complex assembly factor 6 (Drosophila melanogaster (Fruit fly)).